A 177-amino-acid chain; its full sequence is uncharacterized protein (177 aa).

The protein resides in the plastid. Its subcellular location is the chloroplast. This is an uncharacterized protein from Chlorella vulgaris (Green alga).